Here is a 368-residue protein sequence, read N- to C-terminus: Endophilin-A2 (368 aa).

Residues 1–21 are membrane-binding amphipathic helix; that stretch reads MSVAGLKKQFYKASQLVSEKV. The BAR domain occupies 18–249; it reads SEKVGGAEGT…LKRRMREASS (232 aa). The segment at 60–87 is required for dimerization upon membrane association; it reads PNPASRAKLTMLNTVSKIRGQVKNPGYP. Positions 181–250 form a coiled coil; the sequence is EELRQAMEKF…KRRMREASSR (70 aa). The segment at 218–254 is interaction with ARC; it reads LVDAQLDYHRQAVQILDELADKLKRRMREASSRPKRE. The disordered stretch occupies residues 243 to 308; sequence RMREASSRPK…PSRSMPPLDQ (66 aa). Over residues 245-263 the composition is skewed to basic and acidic residues; it reads REASSRPKREYKPKPRELL. A phosphoserine mark is found at Ser288 and Ser292. Thr298 bears the Phosphothreonine mark. One can recognise an SH3 domain in the interval 306–365; the sequence is LDQPSCKALYDFEPENDGELGFHEGDIITLTNQIDENWYEGMLDGQSGFFPLSYVEVLVP. At Tyr315 the chain carries Phosphotyrosine.

Belongs to the endophilin family. In terms of assembly, interacts with ARC, SYNJ1 and DNM1. Interacts with PDCD6IP. Interacts with BIN2.

It is found in the cytoplasm. The protein localises to the early endosome membrane. Its subcellular location is the cell projection. It localises to the podosome. Functionally, implicated in endocytosis. May recruit other proteins to membranes with high curvature. This chain is Endophilin-A2, found in Bos taurus (Bovine).